The sequence spans 30 residues: Thaumatin-like protein (30 aa).

It belongs to the thaumatin family.

The protein resides in the secreted. Functionally, has antifungal activity against C.comatus, F.oxysporum and P.ostreatus. The protein is Thaumatin-like protein of Phaseolus vulgaris (Kidney bean).